We begin with the raw amino-acid sequence, 474 residues long: RNA-binding protein Nova-1 (474 aa).

Residues 1 to 12 (MAAAPIQQNGTH) are compositionally biased toward polar residues. Residues 1–43 (MAAAPIQQNGTHTGVPIDLDPPDSRKRPLEAPPEAGSTKRTNT) are disordered. The short motif at 26–42 (KRPLEAPPEAGSTKRTN) is the Bipartite nuclear localization signal element. KH domains are found at residues 48–115 (QYFL…HGFI), 146–212 (IKQV…VELI), and 396–463 (KDVV…QYLI). Residues 394-474 (GSKDVVEIAV…QRITYEQGVR (81 aa)) are required for RNA binding.

As to quaternary structure, interacts with PTBP2; the interaction is direct.

The protein localises to the nucleus. Its function is as follows. Functions to regulate alternative splicing in neurons by binding pre-mRNA in a sequence-specific manner to activate exon inclusion or exclusion. It binds specifically to the sequences 5'-YCAY-3' and regulates splicing in only a subset of regulated exons. Binding to an exonic 5'-YCAY-3' cluster changes the protein complexes assembled on pre-mRNA, blocking U1 snRNP binding and exon inclusion, whereas binding to an intronic 5'-YCAY-3' cluster enhances spliceosome assembly and exon inclusion. Binding to 5'-YCAY-3' clusters results in a local and asymmetric action to regulate spliceosome assembly and alternative splicing in neurons. Binding to an exonic 5'-YCAY-3' cluster changed the protein complexes assembled on pre-mRNA, blocking U1 snRNP (small nuclear ribonucleoprotein) binding and exon inclusion, whereas binding to an intronic 5'-YCAY-3' cluster enhanced spliceosome assembly and exon inclusion. With NOVA1, they perform unique biological functions in different brain areas and cell types. Autoregulates its own expression by acting as a splicing repressor. Acts to activate the inclusion of exon E3A in the glycine receptor alpha-2 chain and of exon E9 in gamma-aminobutyric-acid receptor gamma-2 subunit via a distal downstream UCAU-rich intronic splicing enhancer. Acts to regulate a novel glycine receptor alpha-2 chain splice variant (alpha-2N) in developing spinal cord. This is RNA-binding protein Nova-1 from Rattus norvegicus (Rat).